The primary structure comprises 45 residues: Putative metallothionein-like protein 1B (45 aa).

It belongs to the metallothionein superfamily. Type 15 family.

Functionally, metallothioneins have a high content of cysteine residues that bind various heavy metals. Confers tolerance to cadmium (Cd) and plays a role in Cd and zinc (Zn) homeostasis. This is Putative metallothionein-like protein 1B (MT1B) from Arabidopsis thaliana (Mouse-ear cress).